The sequence spans 494 residues: Putative glucuronosyltransferase PGSIP7 (494 aa).

The chain crosses the membrane as a helical span at residues 4–24 (QRTLMFSCWVLSLLIIKTTAY). Mn(2+) is bound by residues Asp161 and Asp163. Helical transmembrane passes span 316–336 (YSAEMPWVLTQAVFYLGIILV), 362–382 (AFKFVALLFILSAYIIPFFII), 389–409 (LIGWSLYLTGSFALSTIPINA), 410–430 (FLLPILPVITPWLGIFGTLLV), and 444–464 (LSVFGYAFCCAPFLWVSFVKI).

It belongs to the glycosyltransferase 8 family. Glycogenin subfamily. Requires Mn(2+) as cofactor.

Its subcellular location is the membrane. In Arabidopsis thaliana (Mouse-ear cress), this protein is Putative glucuronosyltransferase PGSIP7 (PGSIP7).